Here is a 212-residue protein sequence, read N- to C-terminus: MSSEVRRGRFITLEGIDGAGKSTHLSFIRDWLARHGVDAAFTREPGGTPLSEKIRDLLLDPGTVASLDAEALLAFAARQQHIAEVIEPALAAGRWLVSDRFTDSTYAFQGGGRGVPFERIRALEDWVQRGLQPDLTLLFDLPTEVAAGRMAGTRVPDRFEQEAADFHRRVRAAYLRRAEEAPQRIAVLDASRGIADIQADIVLHLERLLERG.

15-22 contacts ATP; the sequence is GIDGAGKS.

Belongs to the thymidylate kinase family.

The catalysed reaction is dTMP + ATP = dTDP + ADP. Phosphorylation of dTMP to form dTDP in both de novo and salvage pathways of dTTP synthesis. In Chromobacterium violaceum (strain ATCC 12472 / DSM 30191 / JCM 1249 / CCUG 213 / NBRC 12614 / NCIMB 9131 / NCTC 9757 / MK), this protein is Thymidylate kinase.